Here is a 781-residue protein sequence, read N- to C-terminus: Pyrin (781 aa).

The Pyrin domain occupies 1-92; it reads MAKTPSDHLL…AEELHRAAIQ (92 aa). The segment covering 93 to 111 has biased composition (polar residues); the sequence is EYSTQENGTDDSAASSSLG. The disordered stretch occupies residues 93 to 226; that stretch reads EYSTQENGTD…AGGAPGQKEC (134 aa). The span at 113-126 shows a compositional bias: basic and acidic residues; that stretch reads NKPRSLKTPDHPEG. A compositionally biased stretch (basic residues) spans 153 to 163; it reads LSRKPLSKRRE. Serine 242 carries the post-translational modification Phosphoserine. Positions 266–280 are interaction with RELA; that stretch reads KTAANLDSATEPRAR. 2 disordered regions span residues 270–322 and 336–373; these read NLDS…EGDP and EAVS…QPLP. Residues 370 to 412 form a B box-type zinc finger; the sequence is QPLPQCKRHLKQVQLLFCEDHDEPICLICSLSQEHQGHRVRPI. A coiled-coil region spans residues 413 to 442; sequence EEVALEHKKKIQKQLEHLKKLRKSGEEQRS. The short motif at 420–437 is the Nuclear localization signal element; sequence KKKIQKQLEHLKKLRKSG. Positions 420 to 582 are required for homotrimerization and induction of pyroptosomes; the sequence is KKKIQKQLEH…YFSETLRSEM (163 aa). A B30.2/SPRY domain is found at 580–775; sequence SEMEMFNVPE…NTAPLTICPV (196 aa).

As to quaternary structure, homotrimer. Interacts (via the B box-type zinc finger) with PSTPIP1. Interacts (via the B30.2/SPRY domain) with several components of the inflammasome complex, including CASP1 p20 and p10 subunits, CASP5, PYCARD, NLRP1, NLRP2 and NLRP3, as well as with unprocessed IL1B; this interaction may lead to autophagic degradation of these proteins. Component of the AIM2 PANoptosome complex, a multiprotein complex that drives inflammatory cell death (PANoptosis). Interacts with NFKBIA and RELA. Interacts weakly with VASP and ACTR3. Interacts with active ULK1 (phosphorylated on 'Ser-317') and BECN1 simultaneously. Also interacts with ATG16L1 (via WD repeats), and with ATG8 family members, including GABARAP, GABARAPL1 and, to a lesser extent, GABARAPL2, MAP1LC3A/LC3A and MAP1LC3C/LC3C. Interacts with TRIM21. Interacts with YWHAB, YWHAE, YWHAG, YWHAH, YWHAQ and YWHAZ; the interaction is required for the down-regulation of pyrin pro-inflammatory activity. In terms of processing, cleaved by CASP1. The N-terminal cleavage product localizes to the nucleus as a filamentous network and to the cytoplasm, interacts more strongly with RELA and NFKBIA than the full-length protein, enhances the nuclear localization of RELA and induces NFKBIA proteolysis. The C-terminal cleavage product localizes to the cytoplasm. Phosphorylation at Ser-242 is required for the interaction with 14-3-3 proteins and down-regulation of pyrin pro-inflammatory activity. Post-translationally, degraded along with the delivery of its substrates to autolysosomal compartments (at protein level). In terms of tissue distribution, expressed in peripheral blood leukocytes, particularly in mature granulocytes and to a lesser extent in monocytes but not in lymphocytes. Detected in spleen, lung and muscle, probably as a result of leukocyte infiltration in these tissues. Not expressed in thymus, prostate, testis, ovary, small intestine, colon, heart, brain, placenta, liver, kidney, pancreas. Expression detected in several myeloid leukemic, colon cancer, and prostate cancer cell lines.

It is found in the cytoplasm. The protein resides in the cytoskeleton. Its subcellular location is the cell projection. It localises to the ruffle. The protein localises to the lamellipodium. It is found in the nucleus. The protein resides in the cytoplasmic vesicle. Its subcellular location is the autophagosome. Involved in the regulation of innate immunity and the inflammatory response in response to IFNG/IFN-gamma. Organizes autophagic machinery by serving as a platform for the assembly of ULK1, Beclin 1/BECN1, ATG16L1, and ATG8 family members and recognizes specific autophagy targets, thus coordinating target recognition with assembly of the autophagic apparatus and initiation of autophagy. Acts as an autophagy receptor for the degradation of several inflammasome components, including CASP1, NLRP1 and NLRP3, hence preventing excessive IL1B- and IL18-mediated inflammation. However, it can also have a positive effect in the inflammatory pathway, acting as an innate immune sensor that triggers PYCARD/ASC specks formation, caspase-1 activation, and IL1B and IL18 production. Together with AIM2, also acts as a mediator of pyroptosis, necroptosis and apoptosis (PANoptosis), an integral part of host defense against pathogens, in response to bacterial infection. It is required for PSTPIP1-induced PYCARD/ASC oligomerization and inflammasome formation. Recruits PSTPIP1 to inflammasomes, and is required for PSTPIP1 oligomerization. This chain is Pyrin, found in Homo sapiens (Human).